A 273-amino-acid polypeptide reads, in one-letter code: Fos-related antigen 1 (273 aa).

Disordered regions lie at residues Met1–Ser46 and Gly60–Arg114. The segment covering Glu7–Gln35 has biased composition (low complexity). The bZIP domain maps to Glu105 to His168. The tract at residues Arg107–Lys127 is basic motif. The interval Leu133–Leu161 is leucine-zipper. Over residues Arg169–Pro182 the composition is skewed to basic and acidic residues. A disordered region spans residues Arg169–Leu273. Composition is skewed to low complexity over residues Leu217–Leu235 and Ser254–Leu273. At Ser267 the chain carries Phosphoserine.

The protein belongs to the bZIP family. Fos subfamily. Heterodimer. Interacts with the BAF multiprotein chromatin-remodeling complex subunits SMARCB1 and SMARCD1. Interacts with ARID1A and JUN.

It localises to the nucleus. The chain is Fos-related antigen 1 (Fosl1) from Mus musculus (Mouse).